A 192-amino-acid polypeptide reads, in one-letter code: Inosine triphosphate pyrophosphatase (192 aa).

8 to 13 (TTNLKK) serves as a coordination point for ITP. Glutamate 34 lines the Mg(2+) pocket. ITP is bound by residues lysine 46, 64–65 (DT), lysine 81, 141–144 (EGFD), lysine 164, and 169–170 (HR).

The protein belongs to the HAM1 NTPase family. In terms of assembly, homodimer. The cofactor is Mg(2+). Mn(2+) is required as a cofactor.

It localises to the cytoplasm. The protein localises to the nucleus. The catalysed reaction is ITP + H2O = IMP + diphosphate + H(+). It carries out the reaction dITP + H2O = dIMP + diphosphate + H(+). The enzyme catalyses XTP + H2O = XMP + diphosphate + H(+). In terms of biological role, pyrophosphatase that hydrolyzes non-canonical purine nucleotides such as inosine triphosphate (ITP), deoxyinosine triphosphate (dITP) or xanthosine 5'-triphosphate (XTP) to their respective monophosphate derivatives. The enzyme does not distinguish between the deoxy- and ribose forms. Probably excludes non-canonical purines from RNA and DNA precursor pools, thus preventing their incorporation into RNA and DNA and avoiding chromosomal lesions. This chain is Inosine triphosphate pyrophosphatase, found in Encephalitozoon cuniculi (strain GB-M1) (Microsporidian parasite).